The primary structure comprises 82 residues: Small ribosomal subunit protein bS16 (82 aa).

The protein belongs to the bacterial ribosomal protein bS16 family.

This chain is Small ribosomal subunit protein bS16, found in Vibrio campbellii (strain ATCC BAA-1116).